Here is a 526-residue protein sequence, read N- to C-terminus: Probable Xaa-Pro aminopeptidase GLRG_02280 (526 aa).

Mn(2+) contacts are provided by Asp-285, Asp-296, Glu-454, and Glu-495.

This sequence belongs to the peptidase M24B family. It depends on Mn(2+) as a cofactor.

It catalyses the reaction Release of any N-terminal amino acid, including proline, that is linked to proline, even from a dipeptide or tripeptide.. Functionally, catalyzes the removal of a penultimate prolyl residue from the N-termini of peptides. This chain is Probable Xaa-Pro aminopeptidase GLRG_02280, found in Colletotrichum graminicola (strain M1.001 / M2 / FGSC 10212) (Maize anthracnose fungus).